Consider the following 87-residue polypeptide: Chromosomal protein MC1b (87 aa).

Functionally, protects DNA against thermal denaturation and modulates transcription. This Methanothrix soehngenii (Methanosaeta concilii) protein is Chromosomal protein MC1b.